A 279-amino-acid polypeptide reads, in one-letter code: Large ribosomal subunit protein uL2 (279 aa).

The tract at residues 224–279 (AMNPIDHPHGGGEGRTSGGRHPVTPWGKGTKGNRTRKSKASDKLIVRSRHAKKKGR) is disordered. A compositionally biased stretch (basic residues) spans 269 to 279 (VRSRHAKKKGR).

This sequence belongs to the universal ribosomal protein uL2 family. Part of the 50S ribosomal subunit. Forms a bridge to the 30S subunit in the 70S ribosome.

One of the primary rRNA binding proteins. Required for association of the 30S and 50S subunits to form the 70S ribosome, for tRNA binding and peptide bond formation. It has been suggested to have peptidyltransferase activity; this is somewhat controversial. Makes several contacts with the 16S rRNA in the 70S ribosome. The chain is Large ribosomal subunit protein uL2 from Cereibacter sphaeroides (strain ATCC 17025 / ATH 2.4.3) (Rhodobacter sphaeroides).